Consider the following 282-residue polypeptide: Acetyl-coenzyme A carboxylase carboxyl transferase subunit beta (282 aa).

The region spanning 26–282 (QWVKCPETGE…IIRLLNLLME (257 aa)) is the CoA carboxyltransferase N-terminal domain.

This sequence belongs to the AccD/PCCB family. In terms of assembly, acetyl-CoA carboxylase is a heterohexamer composed of biotin carboxyl carrier protein (AccB), biotin carboxylase (AccC) and two subunits each of ACCase subunit alpha (AccA) and ACCase subunit beta (AccD).

The protein resides in the cytoplasm. It carries out the reaction N(6)-carboxybiotinyl-L-lysyl-[protein] + acetyl-CoA = N(6)-biotinyl-L-lysyl-[protein] + malonyl-CoA. Its pathway is lipid metabolism; malonyl-CoA biosynthesis; malonyl-CoA from acetyl-CoA: step 1/1. Functionally, component of the acetyl coenzyme A carboxylase (ACC) complex. Biotin carboxylase (BC) catalyzes the carboxylation of biotin on its carrier protein (BCCP) and then the CO(2) group is transferred by the transcarboxylase to acetyl-CoA to form malonyl-CoA. The sequence is that of Acetyl-coenzyme A carboxylase carboxyl transferase subunit beta from Salinibacter ruber (strain DSM 13855 / M31).